Consider the following 209-residue polypeptide: Orotate phosphoribosyltransferase (209 aa).

Residues arginine 96, lysine 100, histidine 102, and 122–130 contribute to the 5-phospho-alpha-D-ribose 1-diphosphate site; that span reads EDLISTGGS. Serine 126 is an orotate binding site.

It belongs to the purine/pyrimidine phosphoribosyltransferase family. PyrE subfamily. In terms of assembly, homodimer. Mg(2+) is required as a cofactor.

It carries out the reaction orotidine 5'-phosphate + diphosphate = orotate + 5-phospho-alpha-D-ribose 1-diphosphate. The protein operates within pyrimidine metabolism; UMP biosynthesis via de novo pathway; UMP from orotate: step 1/2. Functionally, catalyzes the transfer of a ribosyl phosphate group from 5-phosphoribose 1-diphosphate to orotate, leading to the formation of orotidine monophosphate (OMP). In Streptococcus thermophilus (strain CNRZ 1066), this protein is Orotate phosphoribosyltransferase.